The primary structure comprises 123 residues: Histone H2B.1/H2B.2 (123 aa).

The interval 1 to 30 is disordered; it reads MPPKVSGKAAKKAGKAQKNITKGDKKKNRK. O-linked (GlcNAc) serine glycosylation is present at Ser-110. Residue Lys-118 forms a Glycyl lysine isopeptide (Lys-Gly) (interchain with G-Cter in ubiquitin) linkage.

Belongs to the histone H2B family. The nucleosome is a histone octamer containing two molecules each of H2A, H2B, H3 and H4 assembled in one H3-H4 heterotetramer and two H2A-H2B heterodimers. The octamer wraps approximately 147 bp of DNA. Post-translationally, monoubiquitination of Lys-118 gives a specific tag for epigenetic transcriptional activation and is also prerequisite for histone H3 'Lys-4' and 'Lys-79' methylation. In terms of processing, glcNAcylation at Ser-110 promotes monoubiquitination of Lys-118. It fluctuates in response to extracellular glucose, and associates with transcribed genes.

The protein localises to the nucleus. It localises to the chromosome. Its function is as follows. Core component of nucleosome. Nucleosomes wrap and compact DNA into chromatin, limiting DNA accessibility to the cellular machineries which require DNA as a template. Histones thereby play a central role in transcription regulation, DNA repair, DNA replication and chromosomal stability. DNA accessibility is regulated via a complex set of post-translational modifications of histones, also called histone code, and nucleosome remodeling. This Tigriopus californicus (Marine copepod) protein is Histone H2B.1/H2B.2.